Consider the following 261-residue polypeptide: MTASPRYWIGTSWKMNKTLAEARGFAEALRDADALRDPAIQRFIIPPFTAVREVKSILSDTSVKVGAQNMHWADQGAWTGEVSPLMLRDCNLDIVELGHSERREHFGETNETVGLKTEAAVRHGLIPLICIGETLSDRESGRAAEILSEQVVGALSKLSGSQKQAQILLAYEPVWAIGEKGIPAEPSYADARQAEIIAVAEKVLGRRIPCLYGGSVNPDNCEELISCPHIDGLFIGRSAWNVEGYLDILAKCAAKLRGDTK.

His-99 functions as the Electrophile in the catalytic mechanism. Residue Glu-172 is the Proton acceptor of the active site.

This sequence belongs to the triosephosphate isomerase family.

It catalyses the reaction L-erythrulose 1-phosphate = D-erythrulose 4-phosphate. The protein operates within carbohydrate metabolism. Involved in catabolism of D-apiose. Catalyzes the isomerization of L-erythrulose 1-phosphate to D-erythrulose 4-phosphate. The sequence is that of L-erythrulose-1-phosphate isomerase from Rhizobium rhizogenes (strain K84 / ATCC BAA-868) (Agrobacterium radiobacter).